Here is a 287-residue protein sequence, read N- to C-terminus: Hypersensitive-induced response protein-like protein 2 (287 aa).

A lipid anchor (N-myristoyl glycine) is attached at glycine 2.

Functionally, positive regulator of hypersensitive response (HR)-like cell death. May be involved in potassium ion channel regulation. The sequence is that of Hypersensitive-induced response protein-like protein 2 (HIRL2) from Oryza sativa subsp. japonica (Rice).